A 275-amino-acid polypeptide reads, in one-letter code: Prohibitin-1 (275 aa).

Positions 106 to 109 (YQNL) match the AIM motif.

This sequence belongs to the prohibitin family. The mitochondrial prohibitin complex consists of two subunits (PHB1 and PHB2). The subunits assemble into a membrane-associated ring-shaped supercomplex of approximately 1 mDa. Interacts with ATG24/SNX4; the interaction is direct and plays a role in mitophagy.

It localises to the mitochondrion inner membrane. Prohibitin probably acts as a holdase/unfoldase for the stabilization of newly synthesized mitochondrial proteins. Involved in mitophagy. Required for the switch to necrotrophic growth. The chain is Prohibitin-1 from Colletotrichum higginsianum (strain IMI 349063) (Crucifer anthracnose fungus).